Reading from the N-terminus, the 172-residue chain is Bone marrow stromal antigen 2 (172 aa).

Over 1–26 the chain is Cytoplasmic; the sequence is MAPSFYHYLPVAMDERWEPKGWSIRR. A Glycyl lysine isopeptide (Lys-Gly) (interchain with G-Cter in ubiquitin) cross-link involves residue K20. Residues 27–47 form a helical; Signal-anchor for type II membrane protein membrane-spanning segment; it reads WWLVAAILVVLIGVVLVCLIV. Residues 48–152 lie on the Extracellular side of the membrane; that stretch reads YFANAAHSEA…EISTTVQVNS (105 aa). N70 and N97 each carry an N-linked (GlcNAc...) asparagine glycan. Residues 103-149 are a coiled coil; sequence LRDSLKKKVSQTQEQQARIKELENKIERLNQELENLRTQKEISTTVQ. A lipid anchor (GPI-anchor amidated serine) is attached at S152. A propeptide spans 153 to 172 (removed in mature form); sequence GGSVVVSSLLVLVAVLFLHF.

Parallel homodimer; disulfide-linked. May form homotetramers under reducing conditions. Isoform 1 and isoform 2 form homodimers and also heterodimers with each other. Dimerization is essential for its antiviral activity. Interacts (via cytoplasmic domain) with ARHGAP44. Interacts with MMP14 (via C-terminal cytoplasmic tail). Interacts with LILRA4/ILT7. Interacts with RNF115. N-glycosylated. Post-translationally, the GPI anchor is essential for its antiviral activity. In terms of tissue distribution, ubiquitously expressed, with highest levels in brain and liver. Present in liver (at protein level).

The protein localises to the golgi apparatus. The protein resides in the trans-Golgi network. It is found in the cell membrane. It localises to the late endosome. Its subcellular location is the membrane raft. The protein localises to the cytoplasm. The protein resides in the apical cell membrane. In terms of biological role, IFN-induced antiviral host restriction factor which efficiently blocks the release of diverse mammalian enveloped viruses by directly tethering nascent virions to the membranes of infected cells. Acts as a direct physical tether, holding virions to the cell membrane and linking virions to each other. The tethered virions can be internalized by endocytosis and subsequently degraded or they can remain on the cell surface. In either case, their spread as cell-free virions is restricted. Its target viruses belong to diverse families, including retroviridae: human immunodeficiency virus type 1 (HIV-1), mouse mammary tumor virus (MMTV) and murine leukemia virus (MLV), filoviridae: ebola virus (EBOV), arenaviridae: lassa virus (LASV), and rhabdoviridae: vesicular stomatitis virus (VSV). Can inhibit cell surface proteolytic activity of MMP14 causing decreased activation of MMP15 which results in inhibition of cell growth and migration. Can stimulate signaling by LILRA4/ILT7 and consequently provide negative feedback to the production of IFN by plasmacytoid dendritic cells in response to viral infection. Plays a role in the organization of the subapical actin cytoskeleton in polarized epithelial cells. The protein is Bone marrow stromal antigen 2 (Bst2) of Rattus norvegicus (Rat).